Consider the following 821-residue polypeptide: MSDSQSNKQNQGEDDNNVSSSIESNENYPFRLNDEESEPQSSTTESMLKAKKQSWRQVLMLGFSSLGAIYGDIGTSPLYVLNSIKYPNSSPTEEDIYGAISIIFYLFTFIVIFKYILIVLFLGTNDGEGGQVAIYAKIARSLKIGPKGVHIPGSPEKTDLELLARAETSSSFKSSNLFLNKASGFKTNPKLIKFISKFILFGCFFGCSLVMSDGLLTPTTSVLSAIAGIQIANPSFNDVLAVSEVVLIVLFLIQQFGSNKISFTFAPIIFLWLIGLIISGIYNIVKFHPAVFKSLSPYYAIQLLKHSGIDVFSGAMLSITGTEAMFADVGHFGRLPIQLTLTLFVYPALIICYLGQGAYIIKHPEALSNPFFYSIPGGLNSWIYWVMFVLATLSTIIASQALILGVFSITSQLINLDCFPNFKIIHVSKKYAGKVYIPAINWLLMIGVCATTAGFKNSNNVTAAYGLGITLDFLVTSSLIMVCMTYVYNWNILIPITYALIFLPLEVIMVISNLKKITHGAWFPLMMSGIFMMFLSFWRWARSRKVNQDFKTRIRIGDLYPELKKQPPQSETVDLNDRGRPMSIVNSSNEELVEYGVTLPKILKTNNNQLKVQSKFGLMNLKKYDGIAIMYNDSSVHTLNSPNTVPQVYGKLVSSFSSIPSVFIFCSIRVLSIPTVPNDERVLIGSMKIPGHYRCIIRYGFMEEILIDKELNNHILNSIPDINELAIKFNLNNKCILTKPCTIPILHIFENNLIRSHDYSSEEHETKNPLVKCKRFIRKILINHIFSPIYSDFQSNGKFLKISDEDEESEKKMFLGGVVRI.

The segment covering 1–10 (MSDSQSNKQN) has biased composition (polar residues). Residues 1 to 47 (MSDSQSNKQNQGEDDNNVSSSIESNENYPFRLNDEESEPQSSTTESM) form a disordered region. Residues 1–57 (MSDSQSNKQNQGEDDNNVSSSIESNENYPFRLNDEESEPQSSTTESMLKAKKQSWRQ) lie on the Cytoplasmic side of the membrane. Low complexity predominate over residues 17–27 (NVSSSIESNEN). A helical transmembrane segment spans residues 58 to 78 (VLMLGFSSLGAIYGDIGTSPL). At 79-101 (YVLNSIKYPNSSPTEEDIYGAIS) the chain is on the extracellular side. Residues 102–122 (IIFYLFTFIVIFKYILIVLFL) form a helical membrane-spanning segment. The Cytoplasmic segment spans residues 123 to 190 (GTNDGEGGQV…KASGFKTNPK (68 aa)). Residues 191 to 211 (LIKFISKFILFGCFFGCSLVM) traverse the membrane as a helical segment. At 212-238 (SDGLLTPTTSVLSAIAGIQIANPSFND) the chain is on the extracellular side. Residues 239 to 259 (VLAVSEVVLIVLFLIQQFGSN) form a helical membrane-spanning segment. Lysine 260 is a topological domain (cytoplasmic). A helical transmembrane segment spans residues 261–281 (ISFTFAPIIFLWLIGLIISGI). At 282 to 306 (YNIVKFHPAVFKSLSPYYAIQLLKH) the chain is on the extracellular side. The helical transmembrane segment at 307–327 (SGIDVFSGAMLSITGTEAMFA) threads the bilayer. Over 328-340 (DVGHFGRLPIQLT) the chain is Cytoplasmic. Residues 341 to 361 (LTLFVYPALIICYLGQGAYII) form a helical membrane-spanning segment. At 362–386 (KHPEALSNPFFYSIPGGLNSWIYWV) the chain is on the extracellular side. The helical transmembrane segment at 387-407 (MFVLATLSTIIASQALILGVF) threads the bilayer. Residues 408 to 434 (SITSQLINLDCFPNFKIIHVSKKYAGK) are Cytoplasmic-facing. Residues 435–455 (VYIPAINWLLMIGVCATTAGF) form a helical membrane-spanning segment. Residues 456-463 (KNSNNVTA) lie on the Extracellular side of the membrane. Asparagine 460 carries an N-linked (GlcNAc...) asparagine glycan. A helical transmembrane segment spans residues 464 to 484 (AYGLGITLDFLVTSSLIMVCM). Residues 485–491 (TYVYNWN) lie on the Cytoplasmic side of the membrane. Residues 492–512 (ILIPITYALIFLPLEVIMVIS) form a helical membrane-spanning segment. Residues 513 to 516 (NLKK) lie on the Extracellular side of the membrane. The chain crosses the membrane as a helical span at residues 517–537 (ITHGAWFPLMMSGIFMMFLSF). The Cytoplasmic portion of the chain corresponds to 538-821 (WRWARSRKVN…KMFLGGVVRI (284 aa)).

Belongs to the HAK/KUP transporter (TC 2.A.72) family.

The protein localises to the membrane. Major high-affinity potassium uptake protein. This is High affinity potassium transporter (HAK1) from Schwanniomyces occidentalis (Yeast).